Consider the following 521-residue polypeptide: Acetylcholine receptor subunit beta-like 1 (521 aa).

A signal peptide spans 1 to 24 (MESSCKSWLLCSILVLVAFSLVSA). Over 25 to 235 (SEDEERLVRD…ITFYIIIRRK (211 aa)) the chain is Extracellular. The N-linked (GlcNAc...) asparagine glycan is linked to asparagine 48. An intrachain disulfide couples cysteine 152 to cysteine 166. The next 3 helical transmembrane spans lie at 236-260 (TLFY…VFYL), 268-286 (VTLG…LLVS), and 302-323 (YLLF…IINW). Residues 324–481 (NFRGPRTHRM…WKYVAMVIDR (158 aa)) are Cytoplasmic-facing. Residues 482 to 500 (LQLYIFFIVTTAGTVGILM) traverse the membrane as a helical segment.

It belongs to the ligand-gated ion channel (TC 1.A.9) family. Acetylcholine receptor (TC 1.A.9.1) subfamily. As to expression, CNS in embryos.

The protein localises to the postsynaptic cell membrane. Its subcellular location is the cell membrane. Functionally, after binding acetylcholine, the AChR responds by an extensive change in conformation that affects all subunits and leads to opening of an ion-conducting channel across the plasma membrane. This chain is Acetylcholine receptor subunit beta-like 1 (nAChRbeta1), found in Drosophila melanogaster (Fruit fly).